Reading from the N-terminus, the 295-residue chain is 4-hydroxy-tetrahydrodipicolinate synthase (295 aa).

Thr46 lines the pyruvate pocket. Catalysis depends on Tyr134, which acts as the Proton donor/acceptor. Residue Lys162 is the Schiff-base intermediate with substrate of the active site. Residue Val204 participates in pyruvate binding.

It belongs to the DapA family. In terms of assembly, homotetramer; dimer of dimers.

The protein localises to the cytoplasm. It carries out the reaction L-aspartate 4-semialdehyde + pyruvate = (2S,4S)-4-hydroxy-2,3,4,5-tetrahydrodipicolinate + H2O + H(+). It functions in the pathway amino-acid biosynthesis; L-lysine biosynthesis via DAP pathway; (S)-tetrahydrodipicolinate from L-aspartate: step 3/4. In terms of biological role, catalyzes the condensation of (S)-aspartate-beta-semialdehyde [(S)-ASA] and pyruvate to 4-hydroxy-tetrahydrodipicolinate (HTPA). This Oceanobacillus iheyensis (strain DSM 14371 / CIP 107618 / JCM 11309 / KCTC 3954 / HTE831) protein is 4-hydroxy-tetrahydrodipicolinate synthase.